A 254-amino-acid polypeptide reads, in one-letter code: MAGRYKGLVYSRKRGRYGKTYQALGVKSQRELEQLVNQPGRPVSNRRPALQVAEYLWTTNKTGMTFSPGGSTFLITNFPQGANENCRHTNRTITYKMAVKTWVALDGSMFSRVSKFPIYFWLVYDKNPGESNPSPSAIFDSLYQDQPGTWTVTRNVCHRFVVKKTWSCMLESNGVDPNAKQGSSYYGPGPCYQWRHVTKFFKRLGVSTEWKNSSTGDVADIKEGALYLVCAPGGGATVRVGGRFRMYFKSVGNQ.

Positions 9–35 (VYSRKRGRYGKTYQALGVKSQRELEQL) match the Bipartite nuclear localization signal motif.

Belongs to the geminiviridae capsid protein family. In terms of assembly, homomultimer. Interacts with the movement protein. Binds to single-stranded and double-stranded viral DNA.

Its subcellular location is the virion. The protein localises to the host nucleus. Encapsidates the viral genome into characteristic twinned ('geminate') particles. Binds the genomic viral ssDNA and shuttles it into and out of the cell nucleus. Plays a role in protection of the genome from degradation, virus acquisition and transmission by insect vectors, infectivity, and systemic movement. The CP of monopartite geminiviruses is absolutely essential for virus movement. This chain is Capsid protein, found in Tobacco yellow dwarf virus (strain Australia) (TYDV).